Here is a 158-residue protein sequence, read N- to C-terminus: uncharacterized protein (158 aa).

It belongs to the SixA phosphatase family.

This is an uncharacterized protein from Mycobacterium tuberculosis (strain CDC 1551 / Oshkosh).